A 1466-amino-acid polypeptide reads, in one-letter code: DNA-directed RNA polymerase subunit beta'' (1466 aa).

Positions 220, 296, 303, and 306 each coordinate Zn(2+). The segment at 618–725 is disordered; sequence TREEDLEDEY…EDEYDSSEED (108 aa). Composition is skewed to acidic residues over residues 621-631, 639-651, and 707-725; these read EDLEDEYETLE, DEYE…DEYG, and LEED…SEED.

The protein belongs to the RNA polymerase beta' chain family. RpoC2 subfamily. As to quaternary structure, in plastids the minimal PEP RNA polymerase catalytic core is composed of four subunits: alpha, beta, beta', and beta''. When a (nuclear-encoded) sigma factor is associated with the core the holoenzyme is formed, which can initiate transcription. It depends on Zn(2+) as a cofactor.

It localises to the plastid. The protein resides in the chloroplast. It catalyses the reaction RNA(n) + a ribonucleoside 5'-triphosphate = RNA(n+1) + diphosphate. Functionally, DNA-dependent RNA polymerase catalyzes the transcription of DNA into RNA using the four ribonucleoside triphosphates as substrates. The protein is DNA-directed RNA polymerase subunit beta'' of Agrostis stolonifera (Creeping bentgrass).